Consider the following 61-residue polypeptide: Large ribosomal subunit protein bL32 (61 aa).

Residues 1–16 (MAVPKKKTSKSRKNMR) show a composition bias toward basic residues. Positions 1–20 (MAVPKKKTSKSRKNMRRAHD) are disordered.

It belongs to the bacterial ribosomal protein bL32 family.

This is Large ribosomal subunit protein bL32 from Trichlorobacter lovleyi (strain ATCC BAA-1151 / DSM 17278 / SZ) (Geobacter lovleyi).